Here is a 475-residue protein sequence, read N- to C-terminus: Ribulose bisphosphate carboxylase large chain (475 aa).

Residues methionine 1–serine 2 constitute a propeptide that is removed on maturation. The residue at position 3 (proline 3) is an N-acetylproline. An N6,N6,N6-trimethyllysine modification is found at lysine 14. Residues asparagine 123 and threonine 173 each coordinate substrate. Catalysis depends on lysine 175, which acts as the Proton acceptor. Lysine 177 provides a ligand contact to substrate. Mg(2+)-binding residues include lysine 201, aspartate 203, and glutamate 204. Lysine 201 carries the post-translational modification N6-carboxylysine. Histidine 294 (proton acceptor) is an active-site residue. Residues arginine 295, histidine 327, and serine 379 each coordinate substrate.

It belongs to the RuBisCO large chain family. Type I subfamily. Heterohexadecamer of 8 large chains and 8 small chains; disulfide-linked. The disulfide link is formed within the large subunit homodimers. Requires Mg(2+) as cofactor. In terms of processing, the disulfide bond which can form in the large chain dimeric partners within the hexadecamer appears to be associated with oxidative stress and protein turnover.

It is found in the plastid. Its subcellular location is the chloroplast. It catalyses the reaction 2 (2R)-3-phosphoglycerate + 2 H(+) = D-ribulose 1,5-bisphosphate + CO2 + H2O. The enzyme catalyses D-ribulose 1,5-bisphosphate + O2 = 2-phosphoglycolate + (2R)-3-phosphoglycerate + 2 H(+). RuBisCO catalyzes two reactions: the carboxylation of D-ribulose 1,5-bisphosphate, the primary event in carbon dioxide fixation, as well as the oxidative fragmentation of the pentose substrate in the photorespiration process. Both reactions occur simultaneously and in competition at the same active site. This Oenothera argillicola (Appalachian evening primrose) protein is Ribulose bisphosphate carboxylase large chain.